The following is a 350-amino-acid chain: Ferredoxin--NADP reductase (350 aa).

8 residues coordinate FAD: T14, D33, Q41, Y46, A86, F121, D286, and T327.

This sequence belongs to the ferredoxin--NADP reductase type 2 family. In terms of assembly, homodimer. FAD serves as cofactor.

The enzyme catalyses 2 reduced [2Fe-2S]-[ferredoxin] + NADP(+) + H(+) = 2 oxidized [2Fe-2S]-[ferredoxin] + NADPH. This chain is Ferredoxin--NADP reductase, found in Flavobacterium johnsoniae (strain ATCC 17061 / DSM 2064 / JCM 8514 / BCRC 14874 / CCUG 350202 / NBRC 14942 / NCIMB 11054 / UW101) (Cytophaga johnsonae).